The primary structure comprises 482 residues: tRNA sulfurtransferase (482 aa).

A THUMP domain is found at 61 to 165 (LAIRDALTRI…DDRLLLIKGR (105 aa)). Residues 183-184 (LI), Lys-265, Gly-287, and Gln-296 each bind ATP. Cys-344 and Cys-456 are joined by a disulfide. The Rhodanese domain occupies 404-482 (FGPNDVILDI…GFENVKAYRP (79 aa)). Catalysis depends on Cys-456, which acts as the Cysteine persulfide intermediate.

Belongs to the ThiI family.

Its subcellular location is the cytoplasm. It catalyses the reaction [ThiI sulfur-carrier protein]-S-sulfanyl-L-cysteine + a uridine in tRNA + 2 reduced [2Fe-2S]-[ferredoxin] + ATP + H(+) = [ThiI sulfur-carrier protein]-L-cysteine + a 4-thiouridine in tRNA + 2 oxidized [2Fe-2S]-[ferredoxin] + AMP + diphosphate. It carries out the reaction [ThiS sulfur-carrier protein]-C-terminal Gly-Gly-AMP + S-sulfanyl-L-cysteinyl-[cysteine desulfurase] + AH2 = [ThiS sulfur-carrier protein]-C-terminal-Gly-aminoethanethioate + L-cysteinyl-[cysteine desulfurase] + A + AMP + 2 H(+). It functions in the pathway cofactor biosynthesis; thiamine diphosphate biosynthesis. Catalyzes the ATP-dependent transfer of a sulfur to tRNA to produce 4-thiouridine in position 8 of tRNAs, which functions as a near-UV photosensor. Also catalyzes the transfer of sulfur to the sulfur carrier protein ThiS, forming ThiS-thiocarboxylate. This is a step in the synthesis of thiazole, in the thiamine biosynthesis pathway. The sulfur is donated as persulfide by IscS. This is tRNA sulfurtransferase from Salmonella gallinarum (strain 287/91 / NCTC 13346).